A 485-amino-acid polypeptide reads, in one-letter code: Glutamate--tRNA ligase (485 aa).

A 'HIGH' region motif is present at residues 12 to 22; sequence PSPTGEPHVGT. Residues 253 to 257 carry the 'KMSKS' region motif; sequence KLSKR. K256 provides a ligand contact to ATP.

This sequence belongs to the class-I aminoacyl-tRNA synthetase family. Glutamate--tRNA ligase type 1 subfamily. Monomer.

The protein resides in the cytoplasm. It carries out the reaction tRNA(Glu) + L-glutamate + ATP = L-glutamyl-tRNA(Glu) + AMP + diphosphate. Functionally, catalyzes the attachment of glutamate to tRNA(Glu) in a two-step reaction: glutamate is first activated by ATP to form Glu-AMP and then transferred to the acceptor end of tRNA(Glu). The chain is Glutamate--tRNA ligase from Sinorhizobium medicae (strain WSM419) (Ensifer medicae).